Consider the following 279-residue polypeptide: HTH-type transcriptional regulator HdfR (279 aa).

Residues 1 to 58 (MDTELLKTFLEVSRTRHFGRAAESLYLTQSAVSFRIRQLENQLGVNLFTRHRNNIRLT) enclose the HTH lysR-type domain. Positions 18-37 (FGRAAESLYLTQSAVSFRIR) form a DNA-binding region, H-T-H motif.

This sequence belongs to the LysR transcriptional regulatory family.

In terms of biological role, negatively regulates the transcription of the flagellar master operon flhDC by binding to the upstream region of the operon. The sequence is that of HTH-type transcriptional regulator HdfR from Escherichia coli O7:K1 (strain IAI39 / ExPEC).